The chain runs to 494 residues: Maintenance of mitochondrial morphology protein 1 (494 aa).

The Lumenal portion of the chain corresponds to 1 to 25 (MGDDQSLRSTVAENDISANLSFTQG). Residues 26–46 (FLLGQLSVVLLIGAFIKFFIF) form a helical membrane-spanning segment. Topologically, residues 47-494 (GEAPPPPSRG…GTLPGGAAAN (448 aa)) are cytoplasmic. 3 disordered regions span residues 53 to 99 (PSRG…VPSS), 278 to 330 (PPLH…KSNV), and 395 to 494 (RTGV…AAAN). Basic residues predominate over residues 57–67 (LSHRASTHRRS). Composition is skewed to polar residues over residues 68-81 (NSIY…GTSR) and 88-99 (STSNVLRPVPSS). An SMP-LTD domain is found at 134–387 (QPESLDWFNV…EPRVQVVGLP (254 aa)). Over residues 278–290 (PPLHTPSPSPSPP) the composition is skewed to pro residues. Polar residues-rich tracts occupy residues 300-318 (THPT…NAQE) and 406-415 (TGSNAASRSA). A compositionally biased stretch (basic and acidic residues) spans 425–437 (RADDIGREPDGLR).

The protein belongs to the MMM1 family. Homodimer. Component of the ER-mitochondria encounter structure (ERMES) or MDM complex, composed of mmm1, mdm10, mdm12 and mdm34. A mmm1 homodimer associates with one molecule of mdm12 on each side in a pairwise head-to-tail manner, and the SMP-LTD domains of mmm1 and mdm12 generate a continuous hydrophobic tunnel for phospholipid trafficking.

The protein resides in the endoplasmic reticulum membrane. Its function is as follows. Component of the ERMES/MDM complex, which serves as a molecular tether to connect the endoplasmic reticulum (ER) and mitochondria. Components of this complex are involved in the control of mitochondrial shape and protein biogenesis, and function in nonvesicular lipid trafficking between the ER and mitochondria. The mdm12-mmm1 subcomplex functions in the major beta-barrel assembly pathway that is responsible for biogenesis of all outer membrane beta-barrel proteins, and acts in a late step after the SAM complex. The mdm10-mdm12-mmm1 subcomplex further acts in the TOM40-specific pathway after the action of the mdm12-mmm1 complex. Essential for establishing and maintaining the structure of mitochondria and maintenance of mtDNA nucleoids. The sequence is that of Maintenance of mitochondrial morphology protein 1 from Aspergillus oryzae (strain ATCC 42149 / RIB 40) (Yellow koji mold).